A 128-amino-acid polypeptide reads, in one-letter code: Large ribosomal subunit protein bL12 (128 aa).

It belongs to the bacterial ribosomal protein bL12 family. In terms of assembly, homodimer. Part of the ribosomal stalk of the 50S ribosomal subunit. Forms a multimeric L10(L12)X complex, where L10 forms an elongated spine to which 2 to 4 L12 dimers bind in a sequential fashion. Binds GTP-bound translation factors.

Functionally, forms part of the ribosomal stalk which helps the ribosome interact with GTP-bound translation factors. Is thus essential for accurate translation. In Thermosipho africanus (strain TCF52B), this protein is Large ribosomal subunit protein bL12.